An 86-amino-acid polypeptide reads, in one-letter code: Apolipoprotein C-I (86 aa).

The signal sequence occupies residues 1-26 (MRLFLSLPVLVVVLLMILEGPGPAQG).

This sequence belongs to the apolipoprotein C1 family.

Its subcellular location is the secreted. Its function is as follows. Inhibitor of lipoprotein binding to the low density lipoprotein (LDL) receptor, LDL receptor-related protein, and very low density lipoprotein (VLDL) receptor. Associates with high density lipoproteins (HDL) and the triacylglycerol-rich lipoproteins in the plasma and makes up about 10% of the protein of the VLDL and 2% of that of HDL. Appears to interfere directly with fatty acid uptake and is also the major plasma inhibitor of cholesteryl ester transfer protein (CETP). Binds free fatty acids and reduces their intracellular esterification. Modulates the interaction of APOE with beta-migrating VLDL and inhibits binding of beta-VLDL to the LDL receptor-related protein. The protein is Apolipoprotein C-I (APOC1) of Ateles geoffroyi (Black-handed spider monkey).